Here is a 748-residue protein sequence, read N- to C-terminus: ATP-dependent rRNA helicase SPB4 (748 aa).

The Q motif motif lies at 15–43 (WAKLNPPLSPWILDVINSMGFKNMTPVQA). The Helicase ATP-binding domain occupies 46–260 (IPRAVKNQDC…GLGLRNPVRI (215 aa)). Position 59–66 (59–66 (AVTGSGKT)) interacts with ATP. The segment at 119–156 (ESEEETGDVEAHAPPFASSSRSPSPQTPDKPLFPLPML) is disordered. The span at 132-142 (PPFASSSRSPS) shows a compositional bias: low complexity. Over residues 143–152 (PQTPDKPLFP) the composition is skewed to pro residues. Residues 207–210 (DEAD) carry the DEAD box motif. The Helicase C-terminal domain maps to 295-460 (KTLQLIRLLL…KAQRSILDFL (166 aa)). A disordered region spans residues 614 to 748 (AQRADNQSSN…IGGGMFDDLE (135 aa)). Composition is skewed to basic and acidic residues over residues 626–669 (ARAE…KYEW) and 708–730 (EIGK…KESS). Positions 732-748 (GGAGGGGIGGGMFDDLE) are enriched in gly residues.

It belongs to the DEAD box helicase family. DDX55/SPB4 subfamily. As to quaternary structure, component of pre-60S ribosomal complexes.

The protein resides in the nucleus. It is found in the nucleolus. It catalyses the reaction ATP + H2O = ADP + phosphate + H(+). Its function is as follows. ATP-binding RNA helicase involved in the biogenesis of 60S ribosomal subunits. Binds 90S pre-ribosomal particles and dissociates from pre-60S ribosomal particles after processing of 27SB pre-rRNA. Required for the normal formation of 18S rRNA through the processing of pre-rRNAs at sites A0, A1 and A2, and the normal formation of 25S and 5.8S rRNAs through the processing of pre-rRNAs at sites C1 and C2. The chain is ATP-dependent rRNA helicase SPB4 from Cryptococcus neoformans var. neoformans serotype D (strain B-3501A) (Filobasidiella neoformans).